Consider the following 454-residue polypeptide: Putative serine/threonine-protein phosphatase C27B7.6 (454 aa).

Mn(2+) contacts are provided by Asp65, His67, Asp93, and Asn125. The active-site Proton donor is His126. 2 residues coordinate Mn(2+): His174 and His252. The interval 414–454 is disordered; that stretch reads RKKLGMTTSTTPPPPRTPSPDAPLAQSPPIPRSPPSSTENA. Pro residues predominate over residues 424–447; that stretch reads TPPPPRTPSPDAPLAQSPPIPRSP.

The protein belongs to the PPP phosphatase family. PP-1 subfamily. Requires Mn(2+) as cofactor.

The catalysed reaction is O-phospho-L-seryl-[protein] + H2O = L-seryl-[protein] + phosphate. It catalyses the reaction O-phospho-L-threonyl-[protein] + H2O = L-threonyl-[protein] + phosphate. The sequence is that of Putative serine/threonine-protein phosphatase C27B7.6 from Caenorhabditis elegans.